The following is a 217-amino-acid chain: Large ribosomal subunit protein uL3 (217 aa).

A disordered region spans residues 129–161 (SRGPMSHGSKNHRAPGSTGAGTTPGRIYPGKRM). Over residues 142-153 (APGSTGAGTTPG) the composition is skewed to low complexity.

It belongs to the universal ribosomal protein uL3 family. Part of the 50S ribosomal subunit. Forms a cluster with proteins L14 and L19.

One of the primary rRNA binding proteins, it binds directly near the 3'-end of the 23S rRNA, where it nucleates assembly of the 50S subunit. The chain is Large ribosomal subunit protein uL3 from Prochlorococcus marinus (strain MIT 9515).